A 48-amino-acid polypeptide reads, in one-letter code: Putative ATP synthase protein 8-like protein (48 aa).

The chain crosses the membrane as a helical span at residues 17–37 (GFLVILLTLLLLSYAFLSMIL).

This sequence belongs to the ATPase protein 8 family.

The protein resides in the membrane. The sequence is that of Putative ATP synthase protein 8-like protein from Eremothecium gossypii (strain ATCC 10895 / CBS 109.51 / FGSC 9923 / NRRL Y-1056) (Yeast).